We begin with the raw amino-acid sequence, 423 residues long: Maintenance of mitochondrial morphology protein 1 (423 aa).

At 1–15 (MWLDDVASELSFTQG) the chain is on the lumenal side. A helical membrane pass occupies residues 16–36 (LLLGQLSIVILIGAFIKFFIF). Residues 37 to 423 (GDPPSPDVSA…PGSMPGLSMA (387 aa)) are Cytoplasmic-facing. The 213-residue stretch at 110 to 322 (QPESLDWFNV…EPRFQQIELP (213 aa)) folds into the SMP-LTD domain. 2 disordered regions span residues 327–370 (RKKN…EAET) and 394–423 (SEEG…LSMA). Basic and acidic residues predominate over residues 350-367 (RSRDVERDLREEARKEVE).

Belongs to the MMM1 family. As to quaternary structure, homodimer. Component of the ER-mitochondria encounter structure (ERMES) or MDM complex, composed of mmm1, mdm10, mdm12 and mdm34. A mmm1 homodimer associates with one molecule of mdm12 on each side in a pairwise head-to-tail manner, and the SMP-LTD domains of mmm1 and mdm12 generate a continuous hydrophobic tunnel for phospholipid trafficking.

Its subcellular location is the endoplasmic reticulum membrane. Functionally, component of the ERMES/MDM complex, which serves as a molecular tether to connect the endoplasmic reticulum (ER) and mitochondria. Components of this complex are involved in the control of mitochondrial shape and protein biogenesis, and function in nonvesicular lipid trafficking between the ER and mitochondria. The mdm12-mmm1 subcomplex functions in the major beta-barrel assembly pathway that is responsible for biogenesis of all outer membrane beta-barrel proteins, and acts in a late step after the SAM complex. The mdm10-mdm12-mmm1 subcomplex further acts in the TOM40-specific pathway after the action of the mdm12-mmm1 complex. Essential for establishing and maintaining the structure of mitochondria and maintenance of mtDNA nucleoids. This chain is Maintenance of mitochondrial morphology protein 1, found in Sclerotinia sclerotiorum (strain ATCC 18683 / 1980 / Ss-1) (White mold).